The sequence spans 5255 residues: SCO-spondin (5255 aa).

An N-terminal signal peptide occupies residues 1 to 18 (MGIVATVLLWVVTEAARG). The EMI domain maps to 19 to 111 (RWCERTEQVT…ACCAGWSGPH (93 aa)). N-linked (GlcNAc...) asparagine glycans are attached at residues asparagine 97, asparagine 136, asparagine 156, and asparagine 255. The 167-residue stretch at 192–358 (ASCTVWAGSR…PDANPELSCS (167 aa)) folds into the VWFD 1 domain. 2 disulfide bridges follow: cysteine 194–cysteine 317 and cysteine 216–cysteine 357. In terms of domain architecture, TIL 1 spans 453–508 (CGHGQRYSDCVSSCPASCMAAGTAEEGHCRDDCASGCECTPGLLLDRGACIPQSAC). Residues 508–601 (CPCLHRGHIY…CGGHQPLSCL (94 aa)) form the VWFC 1 domain. The region spanning 546-717 (AECAVLGDLH…NKYRVSTDCP (172 aa)) is the VWFD 2 domain. 3 disulfides stabilise this stretch: cysteine 548-cysteine 681, cysteine 570-cysteine 716, and cysteine 592-cysteine 600. The N-linked (GlcNAc...) asparagine glycan is linked to asparagine 801. Residues 809 to 868 (CRGGQVYQECSSPCGRTCADLRLDGASSCPSLDNICVSGCNCPEGPVLDDGGQCVPPGVC) enclose the TIL 2 domain. The region spanning 868–926 (CPCQHSSQLYPAGSKIRQGCNACMCTAGTWSCTDAPCPDAAFCPGDLVYVFGSCLRTCD) is the VWFC 2 domain. Asparagine 931 and asparagine 972 each carry an N-linked (GlcNAc...) asparagine glycan. Residues 998–1168 (GTCVATGDPH…NSWRVSLLCP (171 aa)) form the VWFD 3 domain. 3 disulfides stabilise this stretch: cysteine 1000–cysteine 1132, cysteine 1022–cysteine 1167, and cysteine 1043–cysteine 1050. One can recognise a TIL 3 domain in the interval 1263–1319 (CDGGQEYSACGPPCPQTCRNLGLELPEHCDTMSCLEGCFCPEGKVLHEGSCIDPAEC). Residue asparagine 1340 is glycosylated (N-linked (GlcNAc...) asparagine). 6 LDL-receptor class A domains span residues 1362–1398 (HCPD…EVCA), 1400–1436 (HCAP…RGCP), 1439–1477 (PCAP…AGCS), 1479–1515 (SCSV…RGCV), 1515–1551 (VCPA…AFCP), and 1555–1593 (TCAP…VRCM). Cystine bridges form between cysteine 1363–cysteine 1376, cysteine 1370–cysteine 1389, cysteine 1383–cysteine 1397, cysteine 1401–cysteine 1413, cysteine 1408–cysteine 1426, cysteine 1420–cysteine 1435, cysteine 1440–cysteine 1452, cysteine 1447–cysteine 1465, cysteine 1459–cysteine 1476, cysteine 1480–cysteine 1492, cysteine 1487–cysteine 1505, cysteine 1499–cysteine 1514, cysteine 1516–cysteine 1528, cysteine 1523–cysteine 1541, cysteine 1535–cysteine 1550, cysteine 1556–cysteine 1568, cysteine 1563–cysteine 1581, and cysteine 1575–cysteine 1592. N-linked (GlcNAc...) asparagine glycosylation occurs at asparagine 1610. LDL-receptor class A domains follow at residues 1616–1652 (VCGP…LGCN), 1654–1693 (SCVL…DNCG), and 1699–1734 (PCPG…LACE). 3 disulfide bridges follow: cysteine 1617/cysteine 1629, cysteine 1624/cysteine 1642, and cysteine 1636/cysteine 1651. N-linked (GlcNAc...) asparagine glycosylation is present at asparagine 1652. 6 disulfides stabilise this stretch: cysteine 1655–cysteine 1668, cysteine 1662–cysteine 1681, cysteine 1675–cysteine 1692, cysteine 1700–cysteine 1711, cysteine 1706–cysteine 1724, and cysteine 1718–cysteine 1733. N-linked (GlcNAc...) asparagine glycosylation is present at asparagine 1713. Asparagine 1743 is a glycosylation site (N-linked (GlcNAc...) asparagine). In terms of domain architecture, LDL-receptor class A 10 spans 1748-1790 (PCAEYSCRDGDCITFKQVCNGLPDCRDGDMASGWLPSDEWDCG). 6 disulfide bridges follow: cysteine 1749–cysteine 1759, cysteine 1754–cysteine 1772, cysteine 1766–cysteine 1789, cysteine 1801–cysteine 1837, cysteine 1805–cysteine 1842, and cysteine 1816–cysteine 1827. TSP type-1 domains lie at 1789-1843 (CGQW…TACP) and 1845-1903 (DGAW…DGCP). A glycan (N-linked (GlcNAc...) asparagine) is linked at asparagine 1856. Cystine bridges form between cysteine 1857-cysteine 1897, cysteine 1861-cysteine 1902, and cysteine 1871-cysteine 1881. A TIL 4 domain is found at 1907–1961 (CPGGLQPRPCAPCPASCADLASRAPCRREQCTPGCWCAEGLVLDGERGCVRPREC). EGF-like domains are found at residues 1919–1956 (CPAS…RGCV) and 1957–1983 (RPRE…CRLC). Positions 1961 to 2019 (CRCEVDGLRYWPGQRMKLNCRLCTCLDGQPRRCRHNPACSVSCSWSAWSPWGECLGPCG) constitute a VWFC 3 domain. A TSP type-1 3 domain is found at 2002–2058 (SCSWSAWSPWGECLGPCGVQSIQWSFRSPSHPGKHGTNRQCRGIYRKARRCQTEPCQ). Cystine bridges form between cysteine 2003-cysteine 2042, cysteine 2014-cysteine 2018, and cysteine 2052-cysteine 2057. The region spanning 2058-2120 (QECEHQGRSR…GKGDSCCFCA (63 aa)) is the VWFC 4 domain. N-linked (GlcNAc...) asparagine glycosylation is found at asparagine 2125 and asparagine 2230. Disulfide bonds link cysteine 2162–cysteine 2310, cysteine 2328–cysteine 2339, cysteine 2335–cysteine 2352, and cysteine 2346–cysteine 2361. One can recognise an F5/8 type C domain in the interval 2162–2310 (CYSPLGIASL…IFLRAELLGC (149 aa)). In terms of domain architecture, LDL-receptor class A 11 spans 2327-2362 (PCGTGEFWCGVSCVTASRRCDGATDCPGGADEAGCE). The interval 2352–2373 (CPGGADEAGCEPPSSTTLPTHP) is disordered. Over residues 2364-2373 (PSSTTLPTHP) the composition is skewed to polar residues. LDL-receptor class A domains follow at residues 2481 to 2517 (LCPP…AHCG) and 2538 to 2574 (TCSP…SSCA). 12 disulfide bridges follow: cysteine 2482-cysteine 2494, cysteine 2489-cysteine 2507, cysteine 2501-cysteine 2516, cysteine 2539-cysteine 2551, cysteine 2546-cysteine 2564, cysteine 2558-cysteine 2573, cysteine 2576-cysteine 2612, cysteine 2587-cysteine 2591, cysteine 2622-cysteine 2627, cysteine 2642-cysteine 2679, cysteine 2646-cysteine 2684, and cysteine 2657-cysteine 2669. TSP type-1 domains follow at residues 2575-2628 (DCIL…RACP) and 2630-2685 (PGAW…QPCG). Positions 2708–2750 (PPCPQVCGDLSATSSCQSPCQEGCRCPPGLFLQEGTCVNASQC) constitute a TIL 5 domain. An N-linked (GlcNAc...) asparagine glycan is attached at asparagine 2746. 3 TSP type-1 domains span residues 2790–2844 (ACAW…TPCA), 2849–2903 (SSGW…APCP), and 2905–2958 (AGVW…RPCG). 9 disulfide bridges follow: cysteine 2791–cysteine 2829, cysteine 2802–cysteine 2806, cysteine 2839–cysteine 2843, cysteine 2861–cysteine 2897, cysteine 2865–cysteine 2902, cysteine 2881–cysteine 2887, cysteine 2917–cysteine 2952, cysteine 2921–cysteine 2957, and cysteine 2932–cysteine 2942. The region spanning 2971-3020 (EECRHSEGRCPWICQDLGAGVACTAQCQPGCHCPAGLLLQNGTCVPPSHC) is the TIL 6 domain. N-linked (GlcNAc...) asparagine glycans are attached at residues asparagine 3011, asparagine 3042, and asparagine 3065. One can recognise a VWFC 5 domain in the interval 3020-3077 (CLCHHRGHLYQPGDINALDTCNNCTCVTGQMVCSTETCPVPCTWSNWTAWSTCSHSCD). TSP type-1 domains lie at 3060 to 3115 (PCTW…QPCR) and 3117 to 3158 (VAPW…APCP). Disulfide bonds link cysteine 3061-cysteine 3099, cysteine 3072-cysteine 3076, and cysteine 3109-cysteine 3114. An N-linked (GlcNAc...) asparagine glycan is attached at asparagine 3136. One can recognise a TIL 7 domain in the interval 3165-3217 (CPPGKQWQACAQGAASCAELSAAPPADGSCHPGCYCPPGALLLNNECVAEAAC). Residues 3217–3275 (CPCAVDGVLYQPGDVVPQGCHNCSCIAGRVTNCSQEDCGDVDGPWTPWTPWSECSASCG) form the VWFC 6 domain. Asparagine 3238 and asparagine 3248 each carry an N-linked (GlcNAc...) asparagine glycan. A TSP type-1 11 domain is found at 3258-3309 (DGPWTPWTPWSECSASCGPGRQRRYRFCSAHPGVPCAEPQPQERPCARQPCH). 3 disulfide bridges follow: cysteine 3270/cysteine 3303, cysteine 3274/cysteine 3308, and cysteine 3285/cysteine 3293. N-linked (GlcNAc...) asparagine glycosylation is found at asparagine 3350, asparagine 3366, and asparagine 3392. 2 consecutive TSP type-1 domains span residues 3410–3475 (PGAW…PPCP) and 3477–3532 (DGAW…SSCP). 6 disulfides stabilise this stretch: cysteine 3422/cysteine 3468, cysteine 3426/cysteine 3474, cysteine 3437/cysteine 3449, cysteine 3489/cysteine 3524, cysteine 3492/cysteine 3531, and cysteine 3502/cysteine 3514. Positions 3534-3589 (CAGGLVAFTCGKPCPHSCEDLREDTACMATPRCLPACACPHGQLLQDGDCVPPELC) constitute a TIL 8 domain. N-linked (GlcNAc...) asparagine glycosylation is found at asparagine 3598 and asparagine 3625. 2 consecutive TSP type-1 domains span residues 3644-3700 (DGGW…EGCP) and 3702-3751 (EEPW…HVCR). Disulfide bonds link cysteine 3656-cysteine 3693, cysteine 3660-cysteine 3699, cysteine 3671-cysteine 3683, cysteine 3714-cysteine 3745, cysteine 3718-cysteine 3750, and cysteine 3729-cysteine 3735. N-linked (GlcNAc...) asparagine glycans are attached at residues asparagine 3823 and asparagine 3869. 4 consecutive TSP type-1 domains span residues 3878 to 3934 (DGGF…PECP), 3951 to 4004 (EEGF…PLCS), 4018 to 4074 (NCSW…QACK), and 4076 to 4131 (DGAW…QPCD). 6 disulfide bridges follow: cysteine 3890/cysteine 3928, cysteine 3894/cysteine 3933, cysteine 3906/cysteine 3918, cysteine 3963/cysteine 3998, cysteine 3967/cysteine 4003, and cysteine 3982/cysteine 3988. The disordered stretch occupies residues 3932–3951 (ECPAVPTTEPGPGVAGAEEE). An N-linked (GlcNAc...) asparagine glycan is attached at asparagine 4018. Cystine bridges form between cysteine 4019–cysteine 4055, cysteine 4030–cysteine 4034, cysteine 4068–cysteine 4073, cysteine 4088–cysteine 4125, cysteine 4092–cysteine 4130, and cysteine 4103–cysteine 4115. The region spanning 4134-4189 (CPPGMALVTCANHCPRHCGDLQEGIVCREEEHCEPGCRCPNGTLEQDGGCVPLAHC) is the TIL 9 domain. N-linked (GlcNAc...) asparagine glycans are attached at residues asparagine 4174 and asparagine 4211. TSP type-1 domains lie at 4230–4282 (RCPW…GPCP), 4322–4384 (GAEH…RPCP), and 4386–4433 (ECSW…SGCS). Cystine bridges form between cysteine 4231–cysteine 4266, cysteine 4242–cysteine 4246, and cysteine 4276–cysteine 4281. Asparagine 4362 is a glycosylation site (N-linked (GlcNAc...) asparagine). Disulfide bonds link cysteine 4387-cysteine 4417, cysteine 4398-cysteine 4400, and cysteine 4427-cysteine 4432. Asparagine 4428 is a glycosylation site (N-linked (GlcNAc...) asparagine). In terms of domain architecture, TIL 10 spans 4437 to 4492 (CEPPFEFQPCSPPCARLCSTLQHPELCPAQSHCLPGCFCPQGLLEQRSACVPPEQC). Asparagine 4498 carries N-linked (GlcNAc...) asparagine glycosylation. TSP type-1 domains follow at residues 4537–4608 (LPLS…DICQ) and 4610–4662 (LCLW…AVCP). 6 disulfide bridges follow: cysteine 4548–cysteine 4601, cysteine 4551–cysteine 4607, cysteine 4575–cysteine 4591, cysteine 4611–cysteine 4646, cysteine 4622–cysteine 4626, and cysteine 4656–cysteine 4661. Positions 4675 to 4722 (TTCANSCPRACADLWQHVECVQGGCKPGCRCPQGQLLQDGLCVPTAQC) constitute a TIL 11 domain. Asparagine 4730, asparagine 4747, and asparagine 4752 each carry an N-linked (GlcNAc...) asparagine glycan. TSP type-1 domains follow at residues 4762-4815 (CPSY…QPCP) and 4817-4869 (GCQL…HNCT). Intrachain disulfides connect cysteine 4774-cysteine 4809, cysteine 4778-cysteine 4814, cysteine 4789-cysteine 4798, cysteine 4818-cysteine 4852, cysteine 4829-cysteine 4833, and cysteine 4863-cysteine 4868. N-linked (GlcNAc...) asparagine glycosylation occurs at asparagine 4867. The TIL 12 domain occupies 4872–4926 (CPRSQVHRECANACPHACADLRPQTQCLPQPCQPGCACPPGQVLQDGACVPPEEC). 2 N-linked (GlcNAc...) asparagine glycosylation sites follow: asparagine 4939 and asparagine 4970. The TSP type-1 27 domain maps to 4979–5033 (DCLWSPWSPWSPCSVTCGMGERLSHRHPLRQRLYEGAECLGPPVRRAACHLPDCA). 3 disulfides stabilise this stretch: cysteine 4980/cysteine 5017, cysteine 4991/cysteine 4995, and cysteine 5027/cysteine 5032. N-linked (GlcNAc...) asparagine glycosylation is found at asparagine 5081, asparagine 5122, and asparagine 5169. The VWFC 7 domain occupies 5092-5150 (CECLHQGQLHQPGSEWQEQCARCRCVDGKANCTDGCTPLSCPEGEVKVREPGRCCPVCR). Cystine bridges form between cysteine 5161-cysteine 5209, cysteine 5175-cysteine 5226, cysteine 5185-cysteine 5242, and cysteine 5189-cysteine 5244. In terms of domain architecture, CTCK spans 5161-5248 (CRRFTELRNI…IHSCECSSCQ (88 aa)).

The protein belongs to the thrombospondin family.

It is found in the secreted. The protein resides in the extracellular space. Involved in the modulation of neuronal aggregation. May be involved in developmental events during the formation of the central nervous system. The sequence is that of SCO-spondin (SSPO) from Gallus gallus (Chicken).